The primary structure comprises 1249 residues: Myosin-1 (1249 aa).

Residues 1–40 form a disordered region; that stretch reads MGHSRRPAGGEKKSRFGRSKAAADVGDGRQAGGKPQVRKA. The region spanning 50–729 is the Myosin motor domain; it reads IGVSDLTLLS…TLFALEAMRD (680 aa). ATP is bound at residue 143 to 150; it reads GESGAGKT. Position 371 is a phosphoserine (Ser371). Residues 418–500 form an actin-binding region; that stretch reads SIGILDIYGF…PGVFAALNDA (83 aa). IQ domains are found at residues 733–753 and 754–779; these read HNMA…RTEC and AIRI…QGHT. One can recognise a TH1 domain in the interval 787–979; the sequence is RRRMSILGSR…PGEPPNSVSK (193 aa). Disordered regions lie at residues 959-1081 and 1127-1249; these read DSYK…KAKA and EAYL…DDDW. Low complexity-rich tracts occupy residues 1026–1035 and 1043–1061; these read PQTAAAQPTP and PVAA…ASAR. The segment covering 1062–1073 has biased composition (pro residues); it reads APPPPPPAPPAA. Residues 1074-1135 enclose the SH3 domain; sequence AGPKKAKALY…PEAYLEEQVA (62 aa). Positions 1137-1149 are enriched in pro residues; that stretch reads TPKPAPPPPPPVA. Residues 1150–1170 are compositionally biased toward low complexity; it reads PRASPAPVNGSAAVAAAKAKA. Residues 1199–1221 are compositionally biased toward polar residues; the sequence is VSMNSQGDSSGASGRGTPSSVSN. A compositionally biased stretch (low complexity) spans 1222-1235; that stretch reads ASLAGGLAEALRAR.

Belongs to the TRAFAC class myosin-kinesin ATPase superfamily. Myosin family. In terms of assembly, interacts (via IQ domains) with camA. In terms of processing, phosphorylation of the TEDS site (Ser-371) is required for the polarization of the actin cytoskeleton. Phosphorylation probably activates the myosin-I ATPase activity.

It localises to the cytoplasm. The protein localises to the cytoskeleton. Its subcellular location is the actin patch. Type-I myosin implicated in the organization of the actin cytoskeleton. Required for proper actin cytoskeleton polarization. At the cell cortex, assembles in patch-like structures together with proteins from the actin-polymerizing machinery and promotes actin assembly. Functions as actin nucleation-promoting factor (NPF) for the Arp2/3 complex. Plays an important role in polarized growth, spore germination, hyphal morphogenesis, and septal wall formation. This chain is Myosin-1 (myoA), found in Emericella nidulans (strain FGSC A4 / ATCC 38163 / CBS 112.46 / NRRL 194 / M139) (Aspergillus nidulans).